We begin with the raw amino-acid sequence, 397 residues long: Staphylopine export protein (397 aa).

12 consecutive transmembrane segments (helical) span residues 12–32 (LYILTLMFFSANAILNVFIPL), 38–58 (GATNTVIGIVMGAYMLTAMVF), 77–97 (IILIINAIALIIYGFTGLEGY), 102–122 (VMQGVCTAFFSMSLQLGIIDA), 134–154 (LYSLFSTIPNLIGPLVAVGIW), 158–178 (NISLFAIVIIFIALTTTFFGY), 217–237 (GIIMIVASIVFGAVSTFVPLY), 239–259 (VSLGFANAGIFLTIQAIAVVA), 285–305 (LLVIASFVVAFGPQVGAIIFY), 309–329 (ILIGMTQAMVYPTLTSYLSFV), 337–357 (MLLGLFIACADLGISLGGALM), and 363–383 (LVGFKWMYLICGMLVIVIMIM).

The protein belongs to the major facilitator superfamily.

The protein resides in the cell membrane. Functionally, involved in the export of the metallophore staphylopine. The chain is Staphylopine export protein from Staphylococcus aureus (strain Mu50 / ATCC 700699).